The chain runs to 325 residues: ATP synthase subunit gamma, mitochondrial (325 aa).

A mitochondrion-targeting transit peptide spans 1–42 (MAMAVFRREGRRLLPSIAARPIAAIRSPLSSDQEEGLLGVRS).

It belongs to the ATPase gamma chain family. F-type ATPases have 2 components, CF(1) - the catalytic core - and CF(0) - the membrane proton channel. CF(1) has five subunits: alpha(3), beta(3), gamma(1), delta(1), epsilon(1). CF(0) has three main subunits: a, b and c.

The protein localises to the mitochondrion. Its subcellular location is the mitochondrion inner membrane. Mitochondrial membrane ATP synthase (F(1)F(0) ATP synthase or Complex V) produces ATP from ADP in the presence of a proton gradient across the membrane which is generated by electron transport complexes of the respiratory chain. F-type ATPases consist of two structural domains, F(1) - containing the extramembraneous catalytic core, and F(0) - containing the membrane proton channel, linked together by a central stalk and a peripheral stalk. During catalysis, ATP synthesis in the catalytic domain of F(1) is coupled via a rotary mechanism of the central stalk subunits to proton translocation. Part of the complex F(1) domain and the central stalk which is part of the complex rotary element. The gamma subunit protrudes into the catalytic domain formed of alpha(3)beta(3). Rotation of the central stalk against the surrounding alpha(3)beta(3) subunits leads to hydrolysis of ATP in three separate catalytic sites on the beta subunits. The polypeptide is ATP synthase subunit gamma, mitochondrial (ATPC) (Arabidopsis thaliana (Mouse-ear cress)).